Consider the following 226-residue polypeptide: ATP synthase F(0) complex subunit a (226 aa).

A run of 6 helical transmembrane segments spans residues 6-26, 68-88, 97-117, 138-158, 164-184, and 189-209; these read FASFAAPTILGLPAAVLIILF, WSLMLVSLIIFIATTNLLGLL, QLSMNLAMAIPLWAGTVVMGF, IPMLIIIETISLFIQPMALAV, ITAGHLLMHLIGSATLALSTI, and TLIIFTILILLTVLEIAVALI.

This sequence belongs to the ATPase A chain family. Component of the ATP synthase complex composed at least of ATP5F1A/subunit alpha, ATP5F1B/subunit beta, ATP5MC1/subunit c (homooctomer), MT-ATP6/subunit a, MT-ATP8/subunit 8, ATP5ME/subunit e, ATP5MF/subunit f, ATP5MG/subunit g, ATP5MK/subunit k, ATP5MJ/subunit j, ATP5F1C/subunit gamma, ATP5F1D/subunit delta, ATP5F1E/subunit epsilon, ATP5PF/subunit F6, ATP5PB/subunit b, ATP5PD/subunit d, ATP5PO/subunit OSCP. ATP synthase complex consists of a soluble F(1) head domain (subunits alpha(3) and beta(3)) - the catalytic core - and a membrane F(0) domain - the membrane proton channel (subunits c, a, 8, e, f, g, k and j). These two domains are linked by a central stalk (subunits gamma, delta, and epsilon) rotating inside the F1 region and a stationary peripheral stalk (subunits F6, b, d, and OSCP). Interacts with DNAJC30; interaction is direct.

The protein resides in the mitochondrion inner membrane. It carries out the reaction H(+)(in) = H(+)(out). In terms of biological role, subunit a, of the mitochondrial membrane ATP synthase complex (F(1)F(0) ATP synthase or Complex V) that produces ATP from ADP in the presence of a proton gradient across the membrane which is generated by electron transport complexes of the respiratory chain. ATP synthase complex consist of a soluble F(1) head domain - the catalytic core - and a membrane F(1) domain - the membrane proton channel. These two domains are linked by a central stalk rotating inside the F(1) region and a stationary peripheral stalk. During catalysis, ATP synthesis in the catalytic domain of F(1) is coupled via a rotary mechanism of the central stalk subunits to proton translocation. With the subunit c (ATP5MC1), forms the proton-conducting channel in the F(0) domain, that contains two crucial half-channels (inlet and outlet) that facilitate proton movement from the mitochondrial intermembrane space (IMS) into the matrix. Protons are taken up via the inlet half-channel and released through the outlet half-channel, following a Grotthuss mechanism. The polypeptide is ATP synthase F(0) complex subunit a (Pan paniscus (Pygmy chimpanzee)).